The primary structure comprises 232 residues: NKG2-D type II integral membrane protein (232 aa).

Residues 1–66 (MALIRDRKSH…IEKLKISPMF (66 aa)) lie on the Cytoplasmic side of the membrane. A helical; Signal-anchor for type II membrane protein membrane pass occupies residues 67-89 (VVRVLAIALAIRFTLNTLMWLAI). Over 90-232 (FKETFQPVLC…NTYICMKRAV (143 aa)) the chain is Extracellular. 2 disulfides stabilise this stretch: Cys112/Cys121 and Cys115/Cys126. The C-type lectin domain maps to 122-228 (HRNNCYQFFN…CANLNTYICM (107 aa)). Residues Asn137, Asn147, and Asn179 are each glycosylated (N-linked (GlcNAc...) asparagine). 2 disulfides stabilise this stretch: Cys143–Cys227 and Cys205–Cys219.

As to quaternary structure, homodimer; disulfide-linked. Heterohexamer composed of two subunits of KLRK1 and four subunits of HCST/DAP10. Isoform 1 (via transmembrane domain) interacts with HCST/DAP10; the interaction is required for KLRK1 cell surface expression on activated CD8(+) T-cells, but is dispensable on activated TYROBP-expressing NK cells. Isoform 2 (via transmembrane domain) interacts with HCST/DAP10 (via transmembrane domain); the interaction is required for KLRK1 NK cell surface expression and induces NK cell-mediated cytotoxicity. Isoform 2 (via transmembrane domain) interacts with TYROBP (via transmembrane domain); the interaction is required for KLRK1 NK cell surface expression and induce NK cell-mediated cytotoxicity and cytokine secretion. Isoform 1 does not interact with TYROBP. Interacts with CEACAM1; recruits PTPN6 that dephosphorylates VAV1. Expressed in natural killer (NK) cells, activated CD8(+) alpha-beta and gamma-delta T-cells and natural killer T (NKT) cells (at protein level). May be expressed on dendritic cell (DC). Isoform 1 is strongly expressed in natural killer (NK) cells. Isoform 2 is weakly expressed in natural killer (NK) cells. Isoform 1 and isoform 2 are expressed in stimulated, but not in unstimulated, CD8(+) T-cells and macrophages.

It is found in the cell membrane. Functionally, functions as an activating and costimulatory receptor involved in immunosurveillance upon binding to various cellular stress-inducible ligands displayed at the surface of autologous tumor cells and virus-infected cells. Provides both stimulatory and costimulatory innate immune responses on activated killer (NK) cells, leading to cytotoxic activity. Acts as a costimulatory receptor for T-cell receptor (TCR) in CD8(+) T-cell-mediated adaptive immune responses by amplifying T-cell activation. Stimulates perforin-mediated elimination of ligand-expressing tumor cells. Signaling involves calcium influx, culminating in the expression of TNF-alpha. Participates in NK cell-mediated bone marrow graft rejection. May play a regulatory role in differentiation and survival of NK cells. Binds to ligands belonging to various subfamilies of MHC class I-related glycoproteins including RAET1A, RAET1B, RAET1C, RAET1D, RAET1E, H60 and MULT1. This Mus musculus (Mouse) protein is NKG2-D type II integral membrane protein (Klrk1).